Reading from the N-terminus, the 234-residue chain is Exotoxin type G (234 aa).

The first 24 residues, 1-24, serve as a signal peptide directing secretion; that stretch reads MKTNILTIIILSCVFSYGSQLAYA.

It belongs to the staphylococcal/streptococcal toxin family.

Mitogenic for human peripheral blood lymphocytes. This is Exotoxin type G (speG) from Streptococcus pyogenes serotype M1.